A 737-amino-acid chain; its full sequence is ARMADILLO BTB ARABIDOPSIS PROTEIN 1 (737 aa).

ARM repeat units follow at residues 112-154 (DENV…KDCA), 165-212 (PGYQ…NIAH), 215-254 (PRIK…TVSF), 257-296 (DENK…NLVH), 299-338 (PDIK…QFAA), 341-380 (SDCK…RLAQ), 382-421 (AHNQ…GLAD), 456-495 (LKRL…HLCD), and 497-536 (KDGK…ELAK). The region spanning 568–635 (SDVTFLIDGK…IYSGRINIAK (68 aa)) is the BTB domain.

Forms a heterodimeric complex with TCP24. Interacts with the origin recognition complex (preRC) components ORC1A, ORC1B, CDT1A and CDT1B. Interacts with DUF7/AIP1. In terms of tissue distribution, weakly expressed in the emerging lateral roots and mainly expressed in the shoot apex, young leaves and flower buds.

The protein resides in the nucleus. Its pathway is protein modification; protein ubiquitination. In terms of biological role, may act as a substrate-specific adapter of an E3 ubiquitin-protein ligase complex (CUL3-RBX1-BTB) which mediates the ubiquitination and subsequent proteasomal degradation of target proteins. In association with TCP24, exerts a negative role in cell proliferation in leaves, possibly by inhibiting mitotic DNA replication. The chain is ARMADILLO BTB ARABIDOPSIS PROTEIN 1 (ABAP1) from Arabidopsis thaliana (Mouse-ear cress).